Consider the following 363-residue polypeptide: Phosphoribosylformylglycinamidine cyclo-ligase (363 aa).

Belongs to the AIR synthase family.

It localises to the cytoplasm. The enzyme catalyses 2-formamido-N(1)-(5-O-phospho-beta-D-ribosyl)acetamidine + ATP = 5-amino-1-(5-phospho-beta-D-ribosyl)imidazole + ADP + phosphate + H(+). It participates in purine metabolism; IMP biosynthesis via de novo pathway; 5-amino-1-(5-phospho-D-ribosyl)imidazole from N(2)-formyl-N(1)-(5-phospho-D-ribosyl)glycinamide: step 2/2. The protein is Phosphoribosylformylglycinamidine cyclo-ligase of Brucella anthropi (strain ATCC 49188 / DSM 6882 / CCUG 24695 / JCM 21032 / LMG 3331 / NBRC 15819 / NCTC 12168 / Alc 37) (Ochrobactrum anthropi).